The following is a 689-amino-acid chain: DNA ligase (689 aa).

NAD(+) is bound by residues 40-44, 89-90, and glutamate 121; these read DSEYD and SL. The active-site N6-AMP-lysine intermediate is the lysine 123. Arginine 144, glutamate 179, lysine 295, and lysine 319 together coordinate NAD(+). Cysteine 413, cysteine 416, cysteine 431, and cysteine 437 together coordinate Zn(2+). The BRCT domain maps to 610–689; that stretch reads REQSGLTDKI…EEWLTLIKNV (80 aa).

Belongs to the NAD-dependent DNA ligase family. LigA subfamily. Mg(2+) is required as a cofactor. Requires Mn(2+) as cofactor.

The enzyme catalyses NAD(+) + (deoxyribonucleotide)n-3'-hydroxyl + 5'-phospho-(deoxyribonucleotide)m = (deoxyribonucleotide)n+m + AMP + beta-nicotinamide D-nucleotide.. Functionally, DNA ligase that catalyzes the formation of phosphodiester linkages between 5'-phosphoryl and 3'-hydroxyl groups in double-stranded DNA using NAD as a coenzyme and as the energy source for the reaction. It is essential for DNA replication and repair of damaged DNA. In Rickettsia conorii (strain ATCC VR-613 / Malish 7), this protein is DNA ligase.